Here is a 187-residue protein sequence, read N- to C-terminus: Small ribosomal subunit protein uS10m (187 aa).

Belongs to the universal ribosomal protein uS10 family. Component of the mitochondrial ribosome small subunit (28S) which comprises a 12S rRNA and about 30 distinct proteins.

It localises to the mitochondrion. The chain is Small ribosomal subunit protein uS10m (mrps10) from Danio rerio (Zebrafish).